Reading from the N-terminus, the 355-residue chain is DNA polymerase IV (355 aa).

In terms of domain architecture, UmuC spans 7–188; the sequence is IIHIDMDCFY…LPLSKIPGVG (182 aa). Mg(2+) is bound by residues D11 and D106. Residue E107 is part of the active site.

This sequence belongs to the DNA polymerase type-Y family. Monomer. Mg(2+) is required as a cofactor.

It localises to the cytoplasm. The catalysed reaction is DNA(n) + a 2'-deoxyribonucleoside 5'-triphosphate = DNA(n+1) + diphosphate. In terms of biological role, poorly processive, error-prone DNA polymerase involved in untargeted mutagenesis. Copies undamaged DNA at stalled replication forks, which arise in vivo from mismatched or misaligned primer ends. These misaligned primers can be extended by PolIV. Exhibits no 3'-5' exonuclease (proofreading) activity. May be involved in translesional synthesis, in conjunction with the beta clamp from PolIII. The protein is DNA polymerase IV of Mannheimia succiniciproducens (strain KCTC 0769BP / MBEL55E).